A 165-amino-acid polypeptide reads, in one-letter code: Large ribosomal subunit protein uL15 (165 aa).

Residues 1–44 (MSLNQLKAPRGANRAKKRVGRGQGSGLGKTAGRGGKGQKARSGN) form a disordered region. The span at 21 to 37 (RGQGSGLGKTAGRGGKG) shows a compositional bias: gly residues.

The protein belongs to the universal ribosomal protein uL15 family. As to quaternary structure, part of the 50S ribosomal subunit.

In terms of biological role, binds to the 23S rRNA. This Anaeromyxobacter dehalogenans (strain 2CP-1 / ATCC BAA-258) protein is Large ribosomal subunit protein uL15.